A 349-amino-acid polypeptide reads, in one-letter code: Isopentenyl-diphosphate delta-isomerase (349 aa).

Residue 6 to 7 coordinates substrate; that stretch reads RK. Residues 62–64, Ser-93, and Asn-122 each bind FMN; that span reads AMT. Gln-152 serves as a coordination point for substrate. Glu-153 is a Mg(2+) binding site. FMN-binding positions include Lys-184, Thr-214, 258-259, and 280-281; these read GG and AG.

This sequence belongs to the IPP isomerase type 2 family. As to quaternary structure, homooctamer. Dimer of tetramers. Requires FMN as cofactor. NADPH serves as cofactor. The cofactor is Mg(2+).

It localises to the cytoplasm. The enzyme catalyses isopentenyl diphosphate = dimethylallyl diphosphate. Involved in the biosynthesis of isoprenoids. Catalyzes the 1,3-allylic rearrangement of the homoallylic substrate isopentenyl (IPP) to its allylic isomer, dimethylallyl diphosphate (DMAPP). This chain is Isopentenyl-diphosphate delta-isomerase, found in Bacillus anthracis (strain A0248).